Consider the following 397-residue polypeptide: Succinyl-diaminopimelate desuccinylase (397 aa).

Zn(2+) is bound at residue histidine 74. Aspartate 76 is a catalytic residue. Aspartate 107 serves as a coordination point for Zn(2+). Residue glutamate 141 is the Proton acceptor of the active site. 3 residues coordinate Zn(2+): glutamate 142, glutamate 170, and histidine 368.

The protein belongs to the peptidase M20A family. DapE subfamily. Homodimer. Zn(2+) is required as a cofactor. It depends on Co(2+) as a cofactor.

The enzyme catalyses N-succinyl-(2S,6S)-2,6-diaminopimelate + H2O = (2S,6S)-2,6-diaminopimelate + succinate. Its pathway is amino-acid biosynthesis; L-lysine biosynthesis via DAP pathway; LL-2,6-diaminopimelate from (S)-tetrahydrodipicolinate (succinylase route): step 3/3. In terms of biological role, catalyzes the hydrolysis of N-succinyl-L,L-diaminopimelic acid (SDAP), forming succinate and LL-2,6-diaminopimelate (DAP), an intermediate involved in the bacterial biosynthesis of lysine and meso-diaminopimelic acid, an essential component of bacterial cell walls. This Mesorhizobium japonicum (strain LMG 29417 / CECT 9101 / MAFF 303099) (Mesorhizobium loti (strain MAFF 303099)) protein is Succinyl-diaminopimelate desuccinylase.